Here is a 494-residue protein sequence, read N- to C-terminus: Nuclear distribution protein PAC1 (494 aa).

The region spanning Gln-14–Arg-46 is the LisH domain. Residues Asn-90–Leu-123 adopt a coiled-coil conformation. WD repeat units lie at residues Asn-153–Ala-192, Ser-196–Gln-244, Gly-251–Thr-292, Pro-295–Thr-334, His-347–His-395, Gly-415–Glu-454, and His-457–Phe-492.

This sequence belongs to the WD repeat LIS1/nudF family. Self-associates. Interacts with NDL1 and dynein.

The protein localises to the cytoplasm. The protein resides in the cytoskeleton. Its subcellular location is the spindle pole. Functionally, positively regulates the activity of the minus-end directed microtubule motor protein dynein. Plays a central role in positioning the mitotic spindle at the bud neck during cell division. Targets cytoplasmic dynein to microtubule plus ends, thereby promoting dynein-mediated microtubule sliding along the bud cortex and consequently the movement of the mitotic spindle to the bud neck. The chain is Nuclear distribution protein PAC1 from Saccharomyces cerevisiae (strain JAY291) (Baker's yeast).